Reading from the N-terminus, the 262-residue chain is Global transcriptional regulator CodY (262 aa).

The tract at residues 1 to 159 (MAHLLEKTRK…ASTVVGIQLL (159 aa)) is GAF domain. A DNA-binding region (H-T-H motif) is located at residues 207 to 226 (ASVIADRIGITRSVIVNALR).

Belongs to the CodY family.

It localises to the cytoplasm. DNA-binding global transcriptional regulator which is involved in the adaptive response to starvation and acts by directly or indirectly controlling the expression of numerous genes in response to nutrient availability. During rapid exponential growth, CodY is highly active and represses genes whose products allow adaptation to nutrient depletion. In Streptococcus pneumoniae (strain ATCC BAA-255 / R6), this protein is Global transcriptional regulator CodY.